The following is a 116-amino-acid chain: Propanediol dehydratase-reactivating factor small subunit (116 aa).

A Mg(2+)-binding site is contributed by Glu-31.

The protein belongs to the DdrB/PduH family. In terms of assembly, forms a heterotetramer PduG(2)/PduH(2). The cofactor is Mg(2+).

It is found in the bacterial microcompartment. The catalysed reaction is ATP + H2O = ADP + phosphate + H(+). It functions in the pathway polyol metabolism; 1,2-propanediol degradation. Its function is as follows. Small subunit of the propanediol dehydratase-reactivating factor (DDR), which reactivates suicidally inhibited adenosylcobalamin-dependent propanediol dehydratase (diol dehydratase, DDH) found in the bacterial microcompartment (BMC) dedicated to 1,2-propanediol (1,2-PD) degradation. Reactivates inactivated DDH in the presence of ATP, Mg(2+) and free adenosylcobalamin (AdoCbl), by mediating the exchange of the tightly bound damaged cofactor AdoCbl for a free intact one. Functionally, the 1,2-PD-specific bacterial microcompartment (BMC) concentrates low levels of 1,2-PD catabolic enzymes, concentrates volatile reaction intermediates thus enhancing pathway flux and keeps the level of toxic, mutagenic propionaldehyde low. The sequence is that of Propanediol dehydratase-reactivating factor small subunit from Salmonella typhimurium (strain LT2 / SGSC1412 / ATCC 700720).